A 72-amino-acid polypeptide reads, in one-letter code: Alpha-mammal toxin Bot3 (72 aa).

The first 8 residues, 1–8, serve as a signal peptide directing secretion; the sequence is LVMAGVES. Residues 10 to 72 enclose the LCN-type CS-alpha/beta domain; the sequence is KDGYIVDDRN…VRTKGPGRCN (63 aa). Cystine bridges form between Cys20–Cys71, Cys24–Cys44, Cys30–Cys54, and Cys34–Cys56. Asn72 bears the Asparagine amide mark.

The protein belongs to the long (4 C-C) scorpion toxin superfamily. Sodium channel inhibitor family. Alpha subfamily. In terms of processing, when the toxin is not amidated, there are 75% loss of toxicity to mice, and total incapacity to bind rat brain synaptosomes. In terms of tissue distribution, expressed by the venom gland.

It is found in the secreted. Its function is as follows. Alpha toxins bind voltage-independently at site-3 of sodium channels (Nav) and inhibit the inactivation of the activated channels, thereby blocking neuronal transmission. Is active against mammals and binds with high affinity to rat brain synaptosomes. The polypeptide is Alpha-mammal toxin Bot3 (Buthus occitanus tunetanus (Common European scorpion)).